A 424-amino-acid polypeptide reads, in one-letter code: MTVGAGGKTSADADPLMLVRAIADADRRAAHALNLVPSENRISPLASLPLASDFYNRYFFNTDGDPLFWEFRGGEDIAHIEALGAAALRRMASARYCNVRPISGMSAMILTVAALSPPGSTVVSVDQNSGGHYATPALLGRLGRRSRLLNCKDGEVDESELAEVLAPGDVALVYVDVQNCVRVPDFRRMSDVIREVSPGTRLYVDASHYLGLVLGGLLANPLDCGADAFGGSTHKSFPGPHKGVIFTNAEDVDESLRSAQFDLVSSHHFAETLALSLAALEVEDRMGDYARATNDNARRLAGALADAGFRVYGDSATGYTDTHQVWVELDGVAAAYALSNRLAEGGIRVNLQSSMPGMSGVHLRLGSNEVTFEGAGPQAIEELAGALVTARERALGPRTVHEIRGRFGAPFYTDPEKLKVEAGL.

An N6-(pyridoxal phosphate)lysine modification is found at K235.

The protein belongs to the SHMT family. It depends on pyridoxal 5'-phosphate as a cofactor.

The enzyme catalyses uridine-5'-aldehyde + L-threonine = (5'S,6'S)-C-glycyluridine + acetaldehyde. It participates in antibiotic biosynthesis. In terms of biological role, transaldolase involved in the biosynthesis of the lipopeptidyl nucleoside antibiotic A-90289. Catalyzes the condensation of L-threonine and uridine-5'-aldehyde to form 5'-C-glycyluridine (GlyU). Forms (5'S,6'S)-GlyU. Has no activity with alternative amino acids, such as glycine or serine. This is L-threonine:uridine-5'-aldehyde transaldolase from Streptomyces sp.